A 301-amino-acid polypeptide reads, in one-letter code: Nucleotide-binding protein Noca_2527 (301 aa).

ATP is bound at residue 26–33 (GMTGAGRS). 77-80 (DVRS) lines the GTP pocket.

This sequence belongs to the RapZ-like family.

In terms of biological role, displays ATPase and GTPase activities. The chain is Nucleotide-binding protein Noca_2527 from Nocardioides sp. (strain ATCC BAA-499 / JS614).